An 89-amino-acid polypeptide reads, in one-letter code: Small ribosomal subunit protein uS15 (89 aa).

A disordered region spans residues 1 to 24 (MALTQTKKQELISQYQAHETDTGS).

It belongs to the universal ribosomal protein uS15 family. In terms of assembly, part of the 30S ribosomal subunit. Forms a bridge to the 50S subunit in the 70S ribosome, contacting the 23S rRNA.

Its function is as follows. One of the primary rRNA binding proteins, it binds directly to 16S rRNA where it helps nucleate assembly of the platform of the 30S subunit by binding and bridging several RNA helices of the 16S rRNA. Forms an intersubunit bridge (bridge B4) with the 23S rRNA of the 50S subunit in the ribosome. This chain is Small ribosomal subunit protein uS15, found in Microcystis aeruginosa (strain NIES-843 / IAM M-2473).